The following is a 906-amino-acid chain: Protein translocase subunit SecA (906 aa).

ATP-binding positions include Gln87, 105–109 (GEGKT), and Asp512. Positions 839–896 (LEEQQRQQSEAAPRTYTHATAESQLADEEAAGEEGHTTFVRDEQKIGRNDPCPCGSGK) are disordered. Basic and acidic residues predominate over residues 871–886 (EEGHTTFVRDEQKIGR). Zn(2+)-binding residues include Cys890, Cys892, Cys901, and His902.

This sequence belongs to the SecA family. Monomer and homodimer. Part of the essential Sec protein translocation apparatus which comprises SecA, SecYEG and auxiliary proteins SecDF-YajC and YidC. The cofactor is Zn(2+).

Its subcellular location is the cell inner membrane. The protein localises to the cytoplasm. It catalyses the reaction ATP + H2O + cellular proteinSide 1 = ADP + phosphate + cellular proteinSide 2.. Its function is as follows. Part of the Sec protein translocase complex. Interacts with the SecYEG preprotein conducting channel. Has a central role in coupling the hydrolysis of ATP to the transfer of proteins into and across the cell membrane, serving both as a receptor for the preprotein-SecB complex and as an ATP-driven molecular motor driving the stepwise translocation of polypeptide chains across the membrane. The protein is Protein translocase subunit SecA of Aeromonas salmonicida (strain A449).